Reading from the N-terminus, the 231-residue chain is NADH-ubiquinone oxidoreductase chain 4 (231 aa).

A run of 6 helical transmembrane segments spans residues 1-21 (PIAG…YGII), 34-54 (MFLP…LTCL), 63-85 (IAYS…TPWG), 89-111 (AMAL…NTTY), 118-138 (ILIL…WWLL), and 169-189 (TIIL…HMFL).

It belongs to the complex I subunit 4 family.

The protein localises to the mitochondrion membrane. It carries out the reaction a ubiquinone + NADH + 5 H(+)(in) = a ubiquinol + NAD(+) + 4 H(+)(out). Core subunit of the mitochondrial membrane respiratory chain NADH dehydrogenase (Complex I) that is believed to belong to the minimal assembly required for catalysis. Complex I functions in the transfer of electrons from NADH to the respiratory chain. The immediate electron acceptor for the enzyme is believed to be ubiquinone. This Trimeresurus cantori (Cantor's pit viper) protein is NADH-ubiquinone oxidoreductase chain 4 (MT-ND4).